We begin with the raw amino-acid sequence, 93 residues long: uncharacterized protein (93 aa).

This is an uncharacterized protein from Pasteurella multocida (strain Pm70).